We begin with the raw amino-acid sequence, 82 residues long: UPF0291 protein LJ_1507 (82 aa).

The tract at residues 61 to 82 (DGKEVTSEKAKEAQRRKGLRKD) is disordered.

This sequence belongs to the UPF0291 family.

The protein resides in the cytoplasm. This is UPF0291 protein LJ_1507 from Lactobacillus johnsonii (strain CNCM I-12250 / La1 / NCC 533).